We begin with the raw amino-acid sequence, 556 residues long: Melanoma-associated antigen B4 (556 aa).

Residues 1–15 (MPRGQKSKARAREKR) are compositionally biased toward basic residues. The tract at residues 1-110 (MPRGQKSKAR…RFSENPQNDL (110 aa)) is disordered. Positions 39 to 73 (PSCSNQDSGDAVASTSTAGFPQKSKSQGEAPTTTA) are enriched in polar residues. A compositionally biased stretch (basic residues) spans 77-87 (GACRRSRKSTR). The 200-residue stretch at 111–310 (LTRKTGMLMQ…QAFPTHYEEA (200 aa)) folds into the MAGE domain. A disordered region spans residues 315-335 (EERAQAEAVGSPGTSAKDKAE). Ser-325 is modified (phosphoserine). Repeat copies occupy residues 334 to 348 (AEAK…CKYQ), 349 to 363 (AESK…CKDQ), 364 to 378 (AESK…CKDN), 379 to 392 (AKSK…RKYK), 393 to 407 (AKSK…CKDQ), 408 to 421 (AESK…CKDQ), 422 to 436 (AESK…CKDQ), 437 to 451 (AESK…CKDQ), 452 to 466 (AESK…CKDK), 467 to 480 (AKSK…HKYK), 481 to 495 (AKSK…CKDQ), 496 to 510 (AESK…CKDQ), 511 to 525 (AESK…CKDN), 526 to 539 (AKSK…RKYK), and 540 to 554 (AKSK…GKDK). Residues 334–554 (AEAKVTLVDS…PLVDSSGKDK (221 aa)) form a 15 X 15 AA approximate tandem repeats region.

In terms of tissue distribution, expressed in testis (at protein level).

It is found in the cytoplasm. The polypeptide is Melanoma-associated antigen B4 (Mus musculus (Mouse)).